The primary structure comprises 54 residues: Pars intercerebralis major peptide D1 (54 aa).

The protein belongs to the granulin family. Post-translationally, six disulfide bonds are present. Brain.

The protein localises to the secreted. The protein is Pars intercerebralis major peptide D1 of Locusta migratoria (Migratory locust).